Here is a 149-residue protein sequence, read N- to C-terminus: MNVFLSKYVNGVDKKSRVSVPANYRAVLGKELFNGVIAYPSIRNNCIEACGISHIEKLKQMIETLDPYSEERDAFETMIFGEAVQLSFDGDGRVILPQSLMKHAGIEEQACFVGKGVIFEIWQPQNFEKHLKSAQKIAHEQRFTLRNAN.

SpoVT-AbrB domains are found at residues 7–54 (KYVN…GISH) and 83–126 (AVQL…QPQN).

This sequence belongs to the MraZ family. As to quaternary structure, forms oligomers.

It is found in the cytoplasm. It localises to the nucleoid. This chain is Transcriptional regulator MraZ, found in Rickettsia akari (strain Hartford).